Reading from the N-terminus, the 300-residue chain is Probable L-serine dehydratase, alpha chain (300 aa).

Belongs to the iron-sulfur dependent L-serine dehydratase family. In terms of assembly, heterodimer of an alpha chain and a beta chain. Requires [4Fe-4S] cluster as cofactor.

It catalyses the reaction L-serine = pyruvate + NH4(+). It participates in carbohydrate biosynthesis; gluconeogenesis. The sequence is that of Probable L-serine dehydratase, alpha chain (sdaAA) from Bacillus subtilis (strain 168).